Here is a 308-residue protein sequence, read N- to C-terminus: Ribonuclease Z (308 aa).

7 residues coordinate Zn(2+): histidine 61, histidine 63, aspartate 65, histidine 66, histidine 139, aspartate 210, and histidine 268. Catalysis depends on aspartate 65, which acts as the Proton acceptor.

This sequence belongs to the RNase Z family. In terms of assembly, homodimer. Requires Zn(2+) as cofactor.

The catalysed reaction is Endonucleolytic cleavage of RNA, removing extra 3' nucleotides from tRNA precursor, generating 3' termini of tRNAs. A 3'-hydroxy group is left at the tRNA terminus and a 5'-phosphoryl group is left at the trailer molecule.. Its function is as follows. Zinc phosphodiesterase, which displays some tRNA 3'-processing endonuclease activity. Probably involved in tRNA maturation, by removing a 3'-trailer from precursor tRNA. The sequence is that of Ribonuclease Z from Natronomonas pharaonis (strain ATCC 35678 / DSM 2160 / CIP 103997 / JCM 8858 / NBRC 14720 / NCIMB 2260 / Gabara) (Halobacterium pharaonis).